Consider the following 696-residue polypeptide: Interleukin-1 receptor accessory protein-like 1 (696 aa).

A signal peptide spans 1 to 24; that stretch reads MKAPIPHLILLYATFTQSLKVVTK. An Ig-like C2-type 1 domain is found at 25 to 134; it reads RGSADGCTDW…YCMKVSISLT (110 aa). Topologically, residues 25-357 are extracellular; it reads RGSADGCTDW…LLHKRELMYT (333 aa). Intrachain disulfides connect Cys31–Cys126 and Cys53–Cys118. N-linked (GlcNAc...) asparagine glycosylation is found at Asn63, Asn122, and Asn138. Disulfide bonds link Cys143–Cys185 and Cys164–Cys216. 2 consecutive Ig-like C2-type domains span residues 143 to 232 and 242 to 350; these read CYNS…TELT and PKLL…VLLH. N-linked (GlcNAc...) asparagine glycans are attached at residues Asn213, Asn264, and Asn331. Cysteines 267 and 334 form a disulfide. The chain crosses the membrane as a helical span at residues 358–378; that stretch reads VELAGGLGAILLLLVCSVTIY. At 379–696 the chain is on the cytoplasmic side; the sequence is KCYKIEIMLF…RETSISSVIW (318 aa). In terms of domain architecture, TIR spans 403-559; it reads KDYDAYLSYT…KFWKRLQYEM (157 aa). The active site involves Glu491. The tract at residues 549–644 is interaction with NCS1; that stretch reads SKFWKRLQYE…TGTLPLTSIG (96 aa). Positions 659–680 are disordered; that stretch reads GQRPQTKSSREPNPDEAHTNSA. Positions 666–676 are enriched in basic and acidic residues; that stretch reads SSREPNPDEAH.

Belongs to the interleukin-1 receptor family. Homodimer. Interacts (calcium-independent) with NCS1/FREQ. Interacts (via the first immunoglobilin domain) with PTPRD (via the second immunoglobilin domain); this interaction is PTPRD-splicing-dependent and induces pre- and post-synaptic differentiation of neurons and is required for IL1RAPL1-mediated synapse formation.

The protein resides in the cell membrane. Its subcellular location is the cytoplasm. It is found in the cell projection. The protein localises to the axon. It localises to the dendrite. The catalysed reaction is NAD(+) + H2O = ADP-D-ribose + nicotinamide + H(+). Its function is as follows. May regulate secretion and presynaptic differentiation through inhibition of the activity of N-type voltage-gated calcium channel. May activate the MAP kinase JNK. Plays a role in neurite outgrowth. During dendritic spine formation can bidirectionally induce pre- and post-synaptic differentiation of neurons by trans-synaptically binding to PTPRD. This Rattus norvegicus (Rat) protein is Interleukin-1 receptor accessory protein-like 1 (Il1rapl1).